A 306-amino-acid chain; its full sequence is D-alanine--D-alanine ligase (306 aa).

Residues 101-303 (KYLWQGCGLP…FSQLVARILE (203 aa)) form the ATP-grasp domain. 134–189 (IDALGLPLFVKPSREGSSVGISRVNQASELQAALQEAFRFDDEVLVEAFLSGPEYT) provides a ligand contact to ATP. Positions 257, 270, and 272 each coordinate Mg(2+).

Belongs to the D-alanine--D-alanine ligase family. Mg(2+) is required as a cofactor. Requires Mn(2+) as cofactor.

It localises to the cytoplasm. It carries out the reaction 2 D-alanine + ATP = D-alanyl-D-alanine + ADP + phosphate + H(+). It participates in cell wall biogenesis; peptidoglycan biosynthesis. Cell wall formation. In Erwinia tasmaniensis (strain DSM 17950 / CFBP 7177 / CIP 109463 / NCPPB 4357 / Et1/99), this protein is D-alanine--D-alanine ligase.